The sequence spans 271 residues: Insulin-like growth factor-binding protein 5 (271 aa).

The first 19 residues, 1-19, serve as a signal peptide directing secretion; the sequence is MVLTAVLLLLAACAGSAQG. The 81-residue stretch at 22 to 102 folds into the IGFBP N-terminal domain; that stretch reads SFVHCEPCDE…LHGRGVCLNE (81 aa). Intrachain disulfides connect Cys-26–Cys-52, Cys-29–Cys-54, Cys-37–Cys-55, Cys-44–Cys-58, Cys-66–Cys-79, and Cys-73–Cys-99. Basic and acidic residues predominate over residues 109–121; sequence AKIERDSREHEEP. The disordered stretch occupies residues 109-129; that stretch reads AKIERDSREHEEPTTSEMAEE. At Ser-115 the chain carries Phosphoserine. The Thyroglobulin type-1 domain occupies 188 to 262; it reads QGPCRRHMEA…MEYVDGDFQC (75 aa). Disulfide bonds link Cys-191-Cys-218, Cys-229-Cys-240, and Cys-242-Cys-262.

Interacts with IGF1; this interaction enhances the growth stimulatory effects of IGF1 on fibroblasts. Interacts with CAV1; this interaction allows trafficking of IGFBP5 from the plasma membrane to the nucleus. Interacts with NCL; this interaction is necessary for IGFBP5 localization to the nucleus.

It localises to the secreted. Its subcellular location is the cytoplasm. It is found in the nucleus. In terms of biological role, multifunctional protein that plays a critical role in regulating the availability of IGFs to their receptors and thereby regulates IGF-mediated cellular processes including proliferation, differentiation, and apoptosis in a cell-type specific manner. Increases the cell proliferation of osteoblasts, intestinal smooth muscle cells and neuroblastoma cells. Enhances adhesion and survival of epithelial cells but decreases adhesion of mesenchymal cells. Once secreted, acts as a major mediator of mTORC1-dependent feedback inhibition of IGF1 signaling. Also plays a role in the induction of extracellular matrix (ECM) production and deposition independently of its nuclear translocation and binding to IGFs. Acts itself as a growth factor that can act independently of IGFs to regulate bone formation. Acts as a ligand for the ROR1 receptor which triggers formation of ROR1/HER2 heterodimer to enhance CREB oncogenic signaling. This is Insulin-like growth factor-binding protein 5 (IGFBP5) from Bos taurus (Bovine).